The chain runs to 250 residues: Shieldin complex subunit 3 (250 aa).

A sufficient for interaction with MAD2L2 region spans residues 28–83; sequence QDFPTRPLSRFIPWFPYDGSKLPLRPKRSPPVISEEAAEDVKQYLTISEHDAKSHS. Polar residues predominate over residues 108–119; it reads LKEQTNSGNLGK. The tract at residues 108 to 129 is disordered; it reads LKEQTNSGNLGKQSEKGKQHKR.

In terms of assembly, component of the shieldin complex, consisting of SHLD1, SHLD2, SHLD3 and MAD2L2/REV7. Within the complex, SHLD2 forms a scaffold which interacts with a SHLD3-MAD2L2 subcomplex via its N-terminus, and with SHLD1 via its C-terminus. Interacts with ASTE1.

The protein resides in the chromosome. Functionally, component of the shieldin complex, which plays an important role in repair of DNA double-stranded breaks (DSBs). During G1 and S phase of the cell cycle, the complex functions downstream of TP53BP1 to promote non-homologous end joining (NHEJ) and suppress DNA end resection. Mediates various NHEJ-dependent processes including immunoglobulin class-switch recombination, and fusion of unprotected telomeres. This is Shieldin complex subunit 3 from Homo sapiens (Human).